A 643-amino-acid polypeptide reads, in one-letter code: Phosphatidylinositol-3,5-bisphosphate 3-phosphatase MTMR2 (643 aa).

Composition is skewed to polar residues over residues 1–12 (MEKSSSCESLGS) and 23–40 (DSLS…VHTK). The interval 1–56 (MEKSSSCESLGSQPAAARPPSVDSLSSASTSHSENSVHTKSASVVSSDSISTSADN) is disordered. Residues S6 and S9 each carry the phosphoserine modification. Low complexity predominate over residues 41–55 (SASVVSSDSISTSAD). The residue at position 58 (S58) is a Phosphoserine. The GRAM domain occupies 68–139 (NKLAEMEEPP…GVINRVEKIG (72 aa)). The region spanning 205 to 580 (GWKLYDPLLE…RHLELWVGYY (376 aa)) is the Myotubularin phosphatase domain. The a 1,2-diacyl-sn-glycero-3-phospho-(1D-myo-inositol-3,5-bisphosphate) site is built by N330, N355, and I356. A 1,2-diacyl-sn-glycero-3-phospho-(1D-myo-inositol-3-phosphate)-binding residues include N330, N355, and I356. The active-site Phosphocysteine intermediate is C417. The a 1,2-diacyl-sn-glycero-3-phospho-(1D-myo-inositol-3,5-bisphosphate) site is built by S418, D419, G420, W421, D422, R423, R459, and R463. Residues S418, D419, G420, W421, D422, and R423 each contribute to the a 1,2-diacyl-sn-glycero-3-phospho-(1D-myo-inositol-3-phosphate) site. R463 serves as a coordination point for a 1,2-diacyl-sn-glycero-3-phospho-(1D-myo-inositol-3-phosphate). The stretch at 593–627 (IHNRYKELLAKRAELQKKVEELQREISNRSTSSSE) forms a coiled coil. Residues 615-643 (QREISNRSTSSSERASSPAQCVTPVQTVV) are disordered. Over residues 620 to 631 (NRSTSSSERASS) the composition is skewed to low complexity. The span at 632–643 (PAQCVTPVQTVV) shows a compositional bias: polar residues.

The protein belongs to the protein-tyrosine phosphatase family. Non-receptor class myotubularin subfamily. In terms of assembly, homodimer (via coiled-coil domain). Heterotetramer consisting of one MTMR2 dimer and one SBF2/MTMR13 dimer; specifically in peripheral nerves stabilizes SBF2/MTMR13 at the membranes and increases MTMR2 catalytic activity towards phosphatidylinositol 3,5-bisphosphate and to a lesser extent towards phosphatidylinositol 3-phosphate. Heterodimer with SBF1/MTMR5; acts as an adapter for the phosphatase MTMR2 to regulate MTMR2 catalytic activity and subcellular location. Heterodimer with MTMR12. In terms of processing, phosphorylation at Ser-58 decreases MTMR2 localization to endocytic vesicular structures.

It localises to the cytoplasm. The protein localises to the early endosome membrane. It is found in the perinuclear region. The protein resides in the cell projection. Its subcellular location is the axon. It localises to the endosome membrane. It catalyses the reaction a 1,2-diacyl-sn-glycero-3-phospho-(1D-myo-inositol-3,5-bisphosphate) + H2O = a 1,2-diacyl-sn-glycero-3-phospho-(1D-myo-inositol-5-phosphate) + phosphate. The enzyme catalyses a 1,2-diacyl-sn-glycero-3-phospho-(1D-myo-inositol-3-phosphate) + H2O = a 1,2-diacyl-sn-glycero-3-phospho-(1D-myo-inositol) + phosphate. It carries out the reaction 1,2-dioctanoyl-sn-glycero-3-phospho-(1-D-myo-inositol-3-phosphate) + H2O = 1,2-dioctanoyl-sn-glycero-3-phospho-(1D-myo-inositol) + phosphate. The catalysed reaction is 1,2-dioctanoyl-sn-glycero-3-phospho-(1D-myo-inositol-3,5-bisphosphate) + H2O = 1,2-dioctanoyl-sn-glycero-3-phospho-(1D-myo-inositol-5-phosphate) + phosphate. Its function is as follows. Lipid phosphatase that specifically dephosphorylates the D-3 position of phosphatidylinositol 3-phosphate and phosphatidylinositol 3,5-bisphosphate, generating phosphatidylinositol and phosphatidylinositol 5-phosphate. Regulates the level of these phosphoinositides critical for various biological processes including autophagy initiation and autophagosome maturation. The protein is Phosphatidylinositol-3,5-bisphosphate 3-phosphatase MTMR2 of Homo sapiens (Human).